The following is a 681-amino-acid chain: DNA-directed RNA polymerase subunit beta' (681 aa).

Residues cysteine 69, cysteine 71, cysteine 87, and cysteine 90 each coordinate Zn(2+). Residues aspartate 489, aspartate 491, and aspartate 493 each coordinate Mg(2+).

Belongs to the RNA polymerase beta' chain family. RpoC1 subfamily. As to quaternary structure, in plastids the minimal PEP RNA polymerase catalytic core is composed of four subunits: alpha, beta, beta', and beta''. When a (nuclear-encoded) sigma factor is associated with the core the holoenzyme is formed, which can initiate transcription. Mg(2+) is required as a cofactor. It depends on Zn(2+) as a cofactor.

Its subcellular location is the plastid. The protein resides in the chloroplast. The enzyme catalyses RNA(n) + a ribonucleoside 5'-triphosphate = RNA(n+1) + diphosphate. Its function is as follows. DNA-dependent RNA polymerase catalyzes the transcription of DNA into RNA using the four ribonucleoside triphosphates as substrates. The sequence is that of DNA-directed RNA polymerase subunit beta' from Atropa belladonna (Belladonna).